The following is a 302-amino-acid chain: Glutaminase (302 aa).

Residues serine 61, asparagine 111, glutamate 155, asparagine 162, tyrosine 186, tyrosine 238, and valine 256 each contribute to the substrate site.

The protein belongs to the glutaminase family. In terms of assembly, homotetramer.

It carries out the reaction L-glutamine + H2O = L-glutamate + NH4(+). The polypeptide is Glutaminase (Pseudomonas aeruginosa (strain ATCC 15692 / DSM 22644 / CIP 104116 / JCM 14847 / LMG 12228 / 1C / PRS 101 / PAO1)).